The sequence spans 518 residues: MPHHEFECSKVIPERKKHAVIKGKGETLADALPQGYLNTIPGSISERGCAYCGAKHVIGTPMKDVIHISHGPVGCTYDTWQTKRYISDNDNFQLKYTYATDVKEKHIVFGAEKLLKQNIIEAFKAFPQIKRMTIYQTCATALIGDDINAIAEEVMEEMPEVDIFVCNSPGFAGPSQSGGHHKINIAWINQKVGTVEPEITGDHVINYVGEYNIQGDQEVMVDYFKRMGIQVLSTFTGNGSYDGLRAMHRAHLNVLECARSAEYICNELRVRYGIPRLDIDGFGFKPLADSLRKIGMFFGIEDRAKAIIDEEVARWKPELDWYKERLMGKKVCLWPGGSKLWHWAHVIEEEMGLKVVSVYIKFGHQGDMEKGIARCGEGTLAIDDPNELEGLEALEMLKPDIILTGKRPGEVAKKVRVPYLNAHAYHNGPYKGFEGWVRFARDIYNAIYSPIHQLSGIDITKDNAPEWGNGFRTRQMLSDGNLSDAVRNSETLRQYTGGYDSVSKLREREYPAFERKVG.

The [8Fe-7S] cluster site is built by Cys-49, Cys-75, and Cys-138. Residues Cys-257 and His-423 each coordinate [8Fe-9S-C-homocitryl] cluster.

The protein belongs to the NifD/NifK/NifE/NifN family. In terms of assembly, hexamer of two alpha, two beta, and two delta chains. Requires [8Fe-7S] cluster as cofactor. [8Fe-9S-C-homocitryl] cluster is required as a cofactor.

It carries out the reaction N2 + 8 reduced [2Fe-2S]-[ferredoxin] + 16 ATP + 16 H2O = H2 + 8 oxidized [2Fe-2S]-[ferredoxin] + 2 NH4(+) + 16 ADP + 16 phosphate + 6 H(+). In terms of biological role, this iron-iron protein is part of the nitrogenase complex that catalyzes the key enzymatic reactions in nitrogen fixation. Other nitrogenase complexes utilize a molybdenum-iron protein or a vanadium-iron protein. This Azotobacter vinelandii protein is Nitrogenase iron-iron protein alpha chain (anfD).